The primary structure comprises 439 residues: Ribosomal protein uS12 methylthiotransferase RimO (439 aa).

Positions 2-114 constitute an MTTase N-terminal domain; it reads SKLYLMSLGC…IDEMILKKTN (113 aa). Residues Cys11, Cys45, Cys77, Cys146, Cys150, and Cys153 each contribute to the [4Fe-4S] cluster site. The 232-residue stretch at 132-363 folds into the Radical SAM core domain; that stretch reads TGSNSHAFIK…VDEVIEKSFE (232 aa).

The protein belongs to the methylthiotransferase family. RimO subfamily. The cofactor is [4Fe-4S] cluster.

The protein resides in the cytoplasm. The enzyme catalyses L-aspartate(89)-[ribosomal protein uS12]-hydrogen + (sulfur carrier)-SH + AH2 + 2 S-adenosyl-L-methionine = 3-methylsulfanyl-L-aspartate(89)-[ribosomal protein uS12]-hydrogen + (sulfur carrier)-H + 5'-deoxyadenosine + L-methionine + A + S-adenosyl-L-homocysteine + 2 H(+). In terms of biological role, catalyzes the methylthiolation of an aspartic acid residue of ribosomal protein uS12. The chain is Ribosomal protein uS12 methylthiotransferase RimO from Campylobacter jejuni subsp. jejuni serotype O:23/36 (strain 81-176).